A 327-amino-acid chain; its full sequence is Undecaprenyl-phosphate 4-deoxy-4-formamido-L-arabinose transferase (327 aa).

A run of 2 helical transmembrane segments spans residues 233 to 253 (ILSL…LLLI) and 268 to 288 (VFTL…GMGL).

This sequence belongs to the glycosyltransferase 2 family.

It localises to the cell inner membrane. The enzyme catalyses UDP-4-deoxy-4-formamido-beta-L-arabinose + di-trans,octa-cis-undecaprenyl phosphate = 4-deoxy-4-formamido-alpha-L-arabinopyranosyl di-trans,octa-cis-undecaprenyl phosphate + UDP. It participates in glycolipid biosynthesis; 4-amino-4-deoxy-alpha-L-arabinose undecaprenyl phosphate biosynthesis; 4-amino-4-deoxy-alpha-L-arabinose undecaprenyl phosphate from UDP-4-deoxy-4-formamido-beta-L-arabinose and undecaprenyl phosphate: step 1/2. It functions in the pathway bacterial outer membrane biogenesis; lipopolysaccharide biosynthesis. In terms of biological role, catalyzes the transfer of 4-deoxy-4-formamido-L-arabinose from UDP to undecaprenyl phosphate. The modified arabinose is attached to lipid A and is required for resistance to polymyxin and cationic antimicrobial peptides. The protein is Undecaprenyl-phosphate 4-deoxy-4-formamido-L-arabinose transferase of Pectobacterium carotovorum subsp. carotovorum (strain PC1).